Here is a 473-residue protein sequence, read N- to C-terminus: Cysteine--tRNA ligase (473 aa).

Cysteine 28 contacts Zn(2+). The 'HIGH' region signature appears at 30-40 (MTVYDFCHIGH). Residues cysteine 212, histidine 237, and glutamate 241 each coordinate Zn(2+). The 'KMSKS' region motif lies at 277 to 281 (KMSKS). Lysine 280 contacts ATP.

Belongs to the class-I aminoacyl-tRNA synthetase family. In terms of assembly, monomer. It depends on Zn(2+) as a cofactor.

It localises to the cytoplasm. It carries out the reaction tRNA(Cys) + L-cysteine + ATP = L-cysteinyl-tRNA(Cys) + AMP + diphosphate. In Polynucleobacter necessarius subsp. necessarius (strain STIR1), this protein is Cysteine--tRNA ligase.